Reading from the N-terminus, the 255-residue chain is EEF1A lysine methyltransferase 4 (255 aa).

The S-adenosyl-L-methionine site is built by tryptophan 26 and tyrosine 30. Tyrosine 39 is subject to Phosphotyrosine. Residues tryptophan 41, glycine 66, aspartate 88–tyrosine 89, aspartate 113–valine 114, and lysine 130 contribute to the S-adenosyl-L-methionine site. Positions glutamate 129–aspartate 134 match the Required for methyltransferase activity motif.

It belongs to the methyltransferase superfamily.

It catalyses the reaction L-lysyl-[protein] + S-adenosyl-L-methionine = N(6)-methyl-L-lysyl-[protein] + S-adenosyl-L-homocysteine + H(+). It carries out the reaction N(6)-methyl-L-lysyl-[protein] + S-adenosyl-L-methionine = N(6),N(6)-dimethyl-L-lysyl-[protein] + S-adenosyl-L-homocysteine + H(+). The enzyme catalyses N(6),N(6)-dimethyl-L-lysyl-[protein] + S-adenosyl-L-methionine = N(6),N(6),N(6)-trimethyl-L-lysyl-[protein] + S-adenosyl-L-homocysteine + H(+). In terms of biological role, protein-lysine methyltransferase that efficiently catalyzes three successive methylations on 'Lys-36' in eukaryotic translation elongation factor 1 alpha (EEF1A1 or EEF1A2). The protein is EEF1A lysine methyltransferase 4 of Homo sapiens (Human).